Reading from the N-terminus, the 176-residue chain is MQFSIFTVLAAAASFAVALPVCDATTTATTTSAAANPSPTTSGAANPSPTCGKLGDFHKTTVKAGQTLTTIAERFHSGICDIAWQNKLENPNVIFVGQVLLVPVNVCNPDNTSCLVPVGEATCVTGGPATYTIKSGDTFFAVAQSLGITTDSLTGANPGVVPENLQIDQVINVPVC.

A signal peptide spans Met1 to Ala18. The segment covering Thr31–Ala45 has biased composition (low complexity). Residues Thr31 to Thr50 are disordered. The region spanning His58 to Val102 is the LysM 1 domain. Asn111 carries an N-linked (GlcNAc...) asparagine glycan. The LysM 2 domain maps to Ala129 to Val173.

This sequence belongs to the secreted LysM effector family. Forms homodimers in a chitin-independent manner through interactions at the N-termini of EPL2 monomers. Homodimers are further polymerized in a chitin-dependent manner.

The protein localises to the secreted. In terms of biological role, secreted effector that enables the plant pathogenic fungus to manipulate host defenses for successful infection. Binds chitin oligomers and polymer with high affinity and plays a dual role, not only in the suppression of chitin-triggered immune responses, but also in appressorium function. Does not protect fungal hyphae against plant chitinases but suppresses chitin-triggered plant immune responses. Chitin-induced polymerization of homodimers forms a contiguous ELP2 highly oligomeric super-complexe that may precipitate at infection sites to eliminate chitin oligomers, and thus suppress the activation of chitin-induced plant immunity. The chain is Secreted LysM effector ELP2 from Colletotrichum higginsianum (strain IMI 349063) (Crucifer anthracnose fungus).